Here is a 118-residue protein sequence, read N- to C-terminus: Non-specific lipid-transfer protein 2 (118 aa).

Positions 1–25 are cleaved as a signal peptide; that stretch reads MAGVMKLACMVLACMIVAGPITANA. 4 cysteine pairs are disulfide-bonded: cysteine 29–cysteine 76, cysteine 39–cysteine 53, cysteine 54–cysteine 100, and cysteine 74–cysteine 114.

The protein belongs to the plant LTP family.

Its function is as follows. Plant non-specific lipid-transfer proteins transfer phospholipids as well as galactolipids across membranes. May play a role in wax or cutin deposition in the cell walls of expanding epidermal cells and certain secretory tissues. The polypeptide is Non-specific lipid-transfer protein 2 (LTP2) (Arabidopsis thaliana (Mouse-ear cress)).